Reading from the N-terminus, the 351-residue chain is Aromatic amino acid aminotransferase (351 aa).

An N6-(pyridoxal phosphate)lysine modification is found at lysine 215.

Belongs to the class-II pyridoxal-phosphate-dependent aminotransferase family. In terms of assembly, homodimer. It depends on pyridoxal 5'-phosphate as a cofactor.

The catalysed reaction is an aromatic L-alpha-amino acid + 2-oxoglutarate = an aromatic oxo-acid + L-glutamate. Its function is as follows. Aminotransferase that catalyzes the conversion of aromatic amino acids and 2-oxoglutarate into corresponding aromatic oxo acids and L-glutamate. The sequence is that of Aromatic amino acid aminotransferase from Mycolicibacterium vanbaalenii (strain DSM 7251 / JCM 13017 / BCRC 16820 / KCTC 9966 / NRRL B-24157 / PYR-1) (Mycobacterium vanbaalenii).